The following is a 117-amino-acid chain: Transcription elongation factor SPT4 (117 aa).

Positions 1 to 40 are interaction with SUPT5H; that stretch reads MSLETVPKDLRHLRACLLCSLVKTIDQFEYDGCDNCESYL. A C4-type zinc finger spans residues 16–36; the sequence is CLLCSLVKTIDQFEYDGCDNC.

The protein belongs to the SPT4 family. Interacts with SUPT5H to form the DSIF complex. DSIF interacts with RNA polymerase II and with the positive transcription elongation factor b complex (P-TEFb complex), which is composed of CDK9 and cyclin-T.

It localises to the nucleus. May function as a component of the DRB sensitivity-inducing factor complex (DSIF complex), which regulates transcription elongation by RNA polymerase II. Probably enhances transcriptional pausing at sites proximal to the promoter, which may facilitate the assembly of an elongation competent RNA polymerase II complex. Also acts to stimulate transcriptional elongation at low nucleotide concentrations. Regulation of transcriptional elongation by this protein is required for the expression of genes which control neuronal development. In Danio rerio (Zebrafish), this protein is Transcription elongation factor SPT4 (supt4h1).